Consider the following 125-residue polypeptide: Period circadian protein (125 aa).

Residues 1 to 125 (EGSGGSGSSG…VTLTESLLNK (125 aa)) form a disordered region. 3 consecutive repeat copies span residues 30 to 31 (GT), 33 to 34 (GT), and 35 to 36 (GT). Over residues 30 to 84 (GTGGTGTNTGTNTGTGTGTGTGTGTGTGTGTGTGTGTGTGTGTGTGTGKGAGAGT) the composition is skewed to gly residues. The tract at residues 30-86 (GTGGTGTNTGTNTGTGTGTGTGTGTGTGTGTGTGTGTGTGTGTGTGTGKGAGAGTGT) is 28 X 2 AA approximate tandem repeats of G-[TA]. One copy of the 4; approximate repeat lies at 37-38 (NT). Residues 39-40 (GT) form repeat 5. The 6; approximate repeat unit spans residues 41–42 (NT). Repeat copies occupy residues 43 to 44 (GT), 45 to 46 (GT), 47 to 48 (GT), 49 to 50 (GT), 51 to 52 (GT), 53 to 54 (GT), 55 to 56 (GT), 57 to 58 (GT), 59 to 60 (GT), 61 to 62 (GT), 63 to 64 (GT), 65 to 66 (GT), 67 to 68 (GT), 69 to 70 (GT), 71 to 72 (GT), 73 to 74 (GT), and 75 to 76 (GT). A 24; approximate repeat occupies 77-78 (GK). Tandem repeats lie at residues 79-80 (GA), 81-82 (GA), 83-84 (GT), and 85-86 (GT). Over residues 85 to 112 (GTATNETAGPGTTTTTTTRSTTTAATAA) the composition is skewed to low complexity. The segment covering 116-125 (VTLTESLLNK) has biased composition (polar residues).

As to quaternary structure, forms a heterodimer with timeless (TIM); the complex then translocates into the nucleus. Phosphorylated with a circadian rhythmicity, probably by the double-time protein (dbt). Phosphorylation could be implicated in the stability of per monomer and in the formation of heterodimer per-tim.

Its subcellular location is the nucleus. The protein resides in the cytoplasm. It localises to the perinuclear region. Its function is as follows. Essential for biological clock functions. Determines the period length of circadian and ultradian rhythms; an increase in PER dosage leads to shortened circadian rhythms and a decrease leads to lengthened circadian rhythms. Essential for the circadian rhythmicity of locomotor activity, eclosion behavior, and for the rhythmic component of the male courtship song that originates in the thoracic nervous system. The biological cycle depends on the rhythmic formation and nuclear localization of the TIM-PER complex. Light induces the degradation of TIM, which promotes elimination of PER. Nuclear activity of the heterodimer coordinatively regulates PER and TIM transcription through a negative feedback loop. Behaves as a negative element in circadian transcriptional loop. Does not appear to bind DNA, suggesting indirect transcriptional inhibition. The chain is Period circadian protein (per) from Drosophila ananassae (Fruit fly).